Reading from the N-terminus, the 878-residue chain is Phosphoenolpyruvate carboxylase (878 aa).

Active-site residues include His-140 and Lys-545.

Belongs to the PEPCase type 1 family. Mg(2+) serves as cofactor.

It catalyses the reaction oxaloacetate + phosphate = phosphoenolpyruvate + hydrogencarbonate. Its function is as follows. Forms oxaloacetate, a four-carbon dicarboxylic acid source for the tricarboxylic acid cycle. In Pseudomonas aeruginosa (strain ATCC 15692 / DSM 22644 / CIP 104116 / JCM 14847 / LMG 12228 / 1C / PRS 101 / PAO1), this protein is Phosphoenolpyruvate carboxylase.